We begin with the raw amino-acid sequence, 361 residues long: Phospho-N-acetylmuramoyl-pentapeptide-transferase (361 aa).

The next 10 membrane-spanning stretches (helical) occupy residues 25 to 45, 72 to 92, 95 to 115, 135 to 155, 169 to 189, 200 to 220, 240 to 260, 264 to 284, 289 to 309, and 338 to 358; these read TGGA…WIID, TPTM…VLWA, LNPY…VGFY, LLIE…LGRG, VVLN…VGAG, GLAI…SYLV, LAVL…FNAP, IFMG…IAVA, IVLA…IVQV, and QIVI…LSTL.

Belongs to the glycosyltransferase 4 family. MraY subfamily. It depends on Mg(2+) as a cofactor.

The protein localises to the cell inner membrane. The enzyme catalyses UDP-N-acetyl-alpha-D-muramoyl-L-alanyl-gamma-D-glutamyl-meso-2,6-diaminopimeloyl-D-alanyl-D-alanine + di-trans,octa-cis-undecaprenyl phosphate = di-trans,octa-cis-undecaprenyl diphospho-N-acetyl-alpha-D-muramoyl-L-alanyl-D-glutamyl-meso-2,6-diaminopimeloyl-D-alanyl-D-alanine + UMP. The protein operates within cell wall biogenesis; peptidoglycan biosynthesis. In terms of biological role, catalyzes the initial step of the lipid cycle reactions in the biosynthesis of the cell wall peptidoglycan: transfers peptidoglycan precursor phospho-MurNAc-pentapeptide from UDP-MurNAc-pentapeptide onto the lipid carrier undecaprenyl phosphate, yielding undecaprenyl-pyrophosphoryl-MurNAc-pentapeptide, known as lipid I. This chain is Phospho-N-acetylmuramoyl-pentapeptide-transferase, found in Rhodopseudomonas palustris (strain HaA2).